The sequence spans 471 residues: T-box transcription factor T (471 aa).

Positions 24-196 (LWTKFCSLTN…HNPFAKAFLD (173 aa)) form a DNA-binding region, T-box.

In terms of tissue distribution, developing notochord.

Its subcellular location is the nucleus. Functionally, involved in the transcriptional regulation of genes required for mesoderm differentiation. This chain is T-box transcription factor T, found in Halocynthia roretzi (Sea squirt).